Reading from the N-terminus, the 64-residue chain is DNA-binding protein 7b (64 aa).

It belongs to the 7 kDa DNA-binding/endoribonuclease P2 family. In terms of assembly, monomer.

Its subcellular location is the cytoplasm. In terms of biological role, can constrain negative DNA supercoils. May be involved in maintaining the integrity of the genome at high temperature. This chain is DNA-binding protein 7b, found in Saccharolobus islandicus (strain HVE10/4) (Sulfolobus islandicus).